A 199-amino-acid polypeptide reads, in one-letter code: Recombination protein RecR (199 aa).

The segment at 57 to 72 (CSICGNITDEDPCAIC) adopts a C4-type zinc-finger fold. The region spanning 80–176 (STILVVEQPK…KVTRLAHGLS (97 aa)) is the Toprim domain.

Belongs to the RecR family.

In terms of biological role, may play a role in DNA repair. It seems to be involved in an RecBC-independent recombinational process of DNA repair. It may act with RecF and RecO. The protein is Recombination protein RecR of Lacticaseibacillus casei (strain BL23) (Lactobacillus casei).